The primary structure comprises 226 residues: MLFNLIHNIHKEGYIFIMISFLASCIGFAISCSLGIVCLAMSLLCIFFFRDPIRVVPEGDNLITSPADGLILDIKEVNSPIDSSTQVVCISIFLNILNVHVNRIPVSGTIKSTEYIPGRFISASLDKSSELNERQRLIIESNLDKHLIILDQIAGLIARRIVCNAYQGQNVNLGEKFGIIRFGSRVNIYLPLSTHISVFKGQTVIAGETILAYLKEAPKQLTVKSI.

The Schiff-base intermediate with substrate; via pyruvic acid role is filled by Ser-184. Ser-184 is modified (pyruvic acid (Ser); by autocatalysis).

It belongs to the phosphatidylserine decarboxylase family. PSD-A subfamily. As to quaternary structure, heterodimer of a large membrane-associated beta subunit and a small pyruvoyl-containing alpha subunit. The cofactor is pyruvate. In terms of processing, is synthesized initially as an inactive proenzyme. Formation of the active enzyme involves a self-maturation process in which the active site pyruvoyl group is generated from an internal serine residue via an autocatalytic post-translational modification. Two non-identical subunits are generated from the proenzyme in this reaction, and the pyruvate is formed at the N-terminus of the alpha chain, which is derived from the carboxyl end of the proenzyme. The post-translation cleavage follows an unusual pathway, termed non-hydrolytic serinolysis, in which the side chain hydroxyl group of the serine supplies its oxygen atom to form the C-terminus of the beta chain, while the remainder of the serine residue undergoes an oxidative deamination to produce ammonia and the pyruvoyl prosthetic group on the alpha chain.

The protein resides in the cell membrane. The catalysed reaction is a 1,2-diacyl-sn-glycero-3-phospho-L-serine + H(+) = a 1,2-diacyl-sn-glycero-3-phosphoethanolamine + CO2. The protein operates within phospholipid metabolism; phosphatidylethanolamine biosynthesis; phosphatidylethanolamine from CDP-diacylglycerol: step 2/2. Functionally, catalyzes the formation of phosphatidylethanolamine (PtdEtn) from phosphatidylserine (PtdSer). This Ehrlichia canis (strain Jake) protein is Phosphatidylserine decarboxylase proenzyme.